We begin with the raw amino-acid sequence, 427 residues long: 3-phosphoshikimate 1-carboxyvinyltransferase (427 aa).

3-phosphoshikimate contacts are provided by K20, S21, and R25. Phosphoenolpyruvate is bound at residue K20. G92 and R120 together coordinate phosphoenolpyruvate. 3-phosphoshikimate-binding residues include S166, Q168, D312, and K339. Residue Q168 participates in phosphoenolpyruvate binding. Residue D312 is the Proton acceptor of the active site. Positions 343 and 385 each coordinate phosphoenolpyruvate.

Belongs to the EPSP synthase family. As to quaternary structure, monomer.

Its subcellular location is the cytoplasm. It carries out the reaction 3-phosphoshikimate + phosphoenolpyruvate = 5-O-(1-carboxyvinyl)-3-phosphoshikimate + phosphate. The protein operates within metabolic intermediate biosynthesis; chorismate biosynthesis; chorismate from D-erythrose 4-phosphate and phosphoenolpyruvate: step 6/7. Functionally, catalyzes the transfer of the enolpyruvyl moiety of phosphoenolpyruvate (PEP) to the 5-hydroxyl of shikimate-3-phosphate (S3P) to produce enolpyruvyl shikimate-3-phosphate and inorganic phosphate. The sequence is that of 3-phosphoshikimate 1-carboxyvinyltransferase from Streptococcus thermophilus (strain CNRZ 1066).